The chain runs to 999 residues: Probable metabotropic glutamate receptor mgl-1 (999 aa).

L-glutamate is bound by residues Ser202, 223 to 225 (AST), Tyr273, Glu363, and Lys455. N-linked (GlcNAc...) asparagine glycosylation is present at Asn518. 7 helical membrane passes run 682–704 (SLVPTILAVFGIIATLFVIVVYV), 719–739 (LSYILLISMIMCYCMTFVLLS), 751–769 (TGIGFAFSCLYSAMFVKTN), 792–812 (VVMTAMLAGVQLIGSLIWLSV), 836–857 (HHFLYSLAYDGFLIVLCTTYAV), 871–893 (FIGFSMYTTCVVWLSWIFFFFGT), and 904–929 (LCISISMSANVALACIFSPKLWIILF). Positions 975–999 (DSTRRRSSRKTSQPTSTSSAHDTFL) are disordered. The segment covering 984 to 993 (KTSQPTSTSS) has biased composition (low complexity).

It belongs to the G-protein coupled receptor 3 family.

It is found in the cell membrane. Its function is as follows. G-protein coupled receptor for glutamate. Ligand binding causes a conformation change that triggers signaling via guanine nucleotide-binding proteins (G proteins) and modulates the activity of down-stream effectors. The polypeptide is Probable metabotropic glutamate receptor mgl-1 (mgl-1) (Caenorhabditis elegans).